A 336-amino-acid polypeptide reads, in one-letter code: Large ribosomal subunit protein uL1m (336 aa).

A mitochondrion-targeting transit peptide spans 1–50; it reads MAAAVRCLRRVLIHHQRHCLCKMASQASLYPCSVNSLLHNRHFAAAAAAA. Ser85 carries the phosphoserine modification.

This sequence belongs to the universal ribosomal protein uL1 family.

The protein localises to the mitochondrion. This is Large ribosomal subunit protein uL1m (Mrpl1) from Mus musculus (Mouse).